We begin with the raw amino-acid sequence, 214 residues long: ATP-dependent Clp protease proteolytic subunit (214 aa).

The active-site Nucleophile is the S113. Residue H138 is part of the active site.

This sequence belongs to the peptidase S14 family. As to quaternary structure, fourteen ClpP subunits assemble into 2 heptameric rings which stack back to back to give a disk-like structure with a central cavity, resembling the structure of eukaryotic proteasomes.

The protein resides in the cytoplasm. It carries out the reaction Hydrolysis of proteins to small peptides in the presence of ATP and magnesium. alpha-casein is the usual test substrate. In the absence of ATP, only oligopeptides shorter than five residues are hydrolyzed (such as succinyl-Leu-Tyr-|-NHMec, and Leu-Tyr-Leu-|-Tyr-Trp, in which cleavage of the -Tyr-|-Leu- and -Tyr-|-Trp bonds also occurs).. Its function is as follows. Cleaves peptides in various proteins in a process that requires ATP hydrolysis. Has a chymotrypsin-like activity. Plays a major role in the degradation of misfolded proteins. The protein is ATP-dependent Clp protease proteolytic subunit of Alkalilimnicola ehrlichii (strain ATCC BAA-1101 / DSM 17681 / MLHE-1).